We begin with the raw amino-acid sequence, 783 residues long: Endonuclease MutS2 (783 aa).

ATP is bound at residue 337–344; the sequence is GPNTGGKT. A Smr domain is found at 708–783; that stretch reads LHLRGYRYEE…GFGVTVAELK (76 aa).

This sequence belongs to the DNA mismatch repair MutS family. MutS2 subfamily. In terms of assembly, homodimer. Binds to stalled ribosomes, contacting rRNA.

Endonuclease that is involved in the suppression of homologous recombination and thus may have a key role in the control of bacterial genetic diversity. Its function is as follows. Acts as a ribosome collision sensor, splitting the ribosome into its 2 subunits. Detects stalled/collided 70S ribosomes which it binds and splits by an ATP-hydrolysis driven conformational change. Acts upstream of the ribosome quality control system (RQC), a ribosome-associated complex that mediates the extraction of incompletely synthesized nascent chains from stalled ribosomes and their subsequent degradation. Probably generates substrates for RQC. The polypeptide is Endonuclease MutS2 (Staphylococcus haemolyticus (strain JCSC1435)).